The following is a 990-amino-acid chain: A-type ATP synthase subunit B (990 aa).

The 124-residue stretch at 491–614 (VAGLIASDGS…LQLLLKRLGV (124 aa)) folds into the DOD-type homing endonuclease domain.

The protein belongs to the ATPase alpha/beta chains family. Has multiple subunits with at least A(3), B(3), C, D, E, F, H, I and proteolipid K(x). Post-translationally, this protein undergoes a protein self splicing that involves a post-translational excision of the VDE intervening region (intein) followed by peptide ligation.

It is found in the cell membrane. In terms of biological role, component of the A-type ATP synthase that produces ATP from ADP in the presence of a proton gradient across the membrane. The B chain is a regulatory subunit. In Methanopyrus kandleri (strain AV19 / DSM 6324 / JCM 9639 / NBRC 100938), this protein is A-type ATP synthase subunit B.